The following is a 469-amino-acid chain: Glutamine synthetase (469 aa).

The region spanning 14–99 (NDVKFVDLRF…FCDILDPVSG (86 aa)) is the GS beta-grasp domain. Positions 106-469 (PRGTAKKAEA…PVEFDMYYSV (364 aa)) constitute a GS catalytic domain. Mg(2+) is bound by residues glutamate 131 and glutamate 133. Glutamate 209 serves as a coordination point for ATP. The Mg(2+) site is built by glutamate 214 and glutamate 221. Residues 265-266 (NG) and glycine 266 contribute to the L-glutamate site. Histidine 270 provides a ligand contact to Mg(2+). Residues 272 to 274 (HLS) and serine 274 each bind ATP. L-glutamate-binding residues include arginine 322, glutamate 328, and arginine 340. Positions 340, 345, and 353 each coordinate ATP. A Mg(2+)-binding site is contributed by glutamate 358. Arginine 360 is a binding site for L-glutamate. An O-AMP-tyrosine modification is found at tyrosine 398.

Belongs to the glutamine synthetase family. As to quaternary structure, oligomer of 12 subunits arranged in the form of two hexameric ring. Mg(2+) is required as a cofactor.

Its subcellular location is the cytoplasm. It catalyses the reaction L-glutamate + NH4(+) + ATP = L-glutamine + ADP + phosphate + H(+). Its activity is regulated as follows. The activity of this enzyme could be controlled by adenylation under conditions of abundant glutamine. In terms of biological role, catalyzes the ATP-dependent biosynthesis of glutamine from glutamate and ammonia. The chain is Glutamine synthetase from Rhizobium meliloti (strain 1021) (Ensifer meliloti).